The primary structure comprises 175 residues: Vitamin K epoxide reductase complex subunit 1-like protein 1 (175 aa).

The Cytoplasmic segment spans residues 1-12; that stretch reads MAAPVLRVSTPR. A helical membrane pass occupies residues 13-35; the sequence is WERIARVLVCLLGILLSLYAFHV. The Lumenal segment spans residues 36–86; sequence EREHARDPSYKALCDVSSSISCSKVFGSRWGRGFGLLGSIFGNDSALNQPN. A disulfide bridge links C49 with C57. Position 86 (N86) interacts with (S)-warfarin. Residues 87–101 traverse the membrane as a helical segment; sequence SVYGIVFYAFQLLLG. The Cytoplasmic portion of the chain corresponds to 102 to 106; that stretch reads MTVSA. The chain crosses the membrane as a helical span at residues 107–134; sequence MAALILMTTSIMSVVGSLYLGYILYFVL. The Lumenal portion of the chain corresponds to 135–137; the sequence is KDL. A disulfide bridge links C138 with C141. The chain crosses the membrane as a helical span at residues 138 to 159; that stretch reads CVICVTTYALNFILFVLNYKRL. The phylloquinone site is built by C141 and Y145. Y145 serves as a coordination point for (S)-warfarin. At 160–175 the chain is on the cytoplasmic side; it reads VYLNEAWKQKLQAKQD.

Belongs to the VKOR family.

Its subcellular location is the endoplasmic reticulum membrane. It carries out the reaction phylloquinone + [protein]-disulfide + H2O = 2,3-epoxyphylloquinone + [protein]-dithiol. The catalysed reaction is phylloquinol + [protein]-disulfide = phylloquinone + [protein]-dithiol. With respect to regulation, inhibited by warfarin (coumadin). Warfarin locks VKORC1 in both redox states into the closed conformation. Functionally, involved in vitamin K metabolism. Can reduce inactive vitamin K 2,3-epoxide to active vitamin K, and may contribute to vitamin K-mediated protection against oxidative stress. Plays a role in vitamin K-dependent gamma-carboxylation of Glu residues in target proteins. The protein is Vitamin K epoxide reductase complex subunit 1-like protein 1 (vkorc1l1) of Takifugu rubripes (Japanese pufferfish).